The chain runs to 154 residues: MRKLKSKRKNYQPDPIYQDTLVTRFVNHLMKDGKKTIAYRIFYNCISEIEKTKKNGLKIWKEALDNVMPHVEVRSRRIGGSNIQVPTQIPPYVKVTKAMKLLISCARERNEKKMYKKLAEEILSAYKKEGAAFKIRENIHKMAEANKAFSHLKF.

Belongs to the universal ribosomal protein uS7 family. As to quaternary structure, part of the 30S ribosomal subunit. Contacts proteins S9 and S11.

One of the primary rRNA binding proteins, it binds directly to 16S rRNA where it nucleates assembly of the head domain of the 30S subunit. Is located at the subunit interface close to the decoding center, probably blocks exit of the E-site tRNA. The sequence is that of Small ribosomal subunit protein uS7 from Karelsulcia muelleri (strain GWSS) (Sulcia muelleri).